We begin with the raw amino-acid sequence, 270 residues long: MEHGSIITQARREDALVLTKQGLVSKSSPKKPRGRSIFKALLCCFHTQHVVQSSSSTELTHKEEANTIAKSDLLQCLQYQFYQIPGTCLLPEVTEQDQGRICVVIDLDETLVHSSFKPINNADFIVPVEIEGTTHQVYVLKRPYVDEFLRRMGELFECVLFTASLAKYADPVTDLLDRCGVFRARLFREACVFHQGCYVKDLSRLGRDLRKTVILDNSPASYIFHPENAVPVQSWFDDMADTELLNLIPVFEELSGTDDVYTSLGQLRAP.

Ser-5 carries the phosphoserine modification. The FCP1 homology domain maps to 96–254 (QDQGRICVVI…LNLIPVFEEL (159 aa)). Asp-106 (4-aspartylphosphate intermediate) is an active-site residue. Positions 106, 108, and 217 each coordinate Mg(2+). The Proton donor role is filled by Asp-108.

In terms of assembly, monomer. Interacts with REST. The cofactor is Mg(2+). Expression is restricted to non-neuronal tissues.

The protein resides in the nucleus. It carries out the reaction O-phospho-L-seryl-[protein] + H2O = L-seryl-[protein] + phosphate. The enzyme catalyses O-phospho-L-threonyl-[protein] + H2O = L-threonyl-[protein] + phosphate. Its function is as follows. Preferentially catalyzes the dephosphorylation of 'Ser-5' within the tandem 7 residue repeats in the C-terminal domain (CTD) of the largest RNA polymerase II subunit POLR2A. Negatively regulates RNA polymerase II transcription, possibly by controlling the transition from initiation/capping to processive transcript elongation. Recruited by REST to neuronal genes that contain RE-1 elements, leading to neuronal gene silencing in non-neuronal cells. In Mus musculus (Mouse), this protein is Carboxy-terminal domain RNA polymerase II polypeptide A small phosphatase 2 (Ctdsp2).